Consider the following 508-residue polypeptide: Photosystem II CP47 reaction center protein (508 aa).

6 helical membrane-spanning segments follow: residues 21 to 36 (SVHI…WAGS), 101 to 115 (IVFS…IWHW), 140 to 156 (GIHL…FGAF), 203 to 218 (IAAG…FHLS), 237 to 252 (VLSS…AFVV), and 457 to 472 (TFAL…HGAR).

Belongs to the PsbB/PsbC family. PsbB subfamily. As to quaternary structure, PSII is composed of 1 copy each of membrane proteins PsbA, PsbB, PsbC, PsbD, PsbE, PsbF, PsbH, PsbI, PsbJ, PsbK, PsbL, PsbM, PsbT, PsbX, PsbY, PsbZ, Psb30/Ycf12, at least 3 peripheral proteins of the oxygen-evolving complex and a large number of cofactors. It forms dimeric complexes. The cofactor is Binds multiple chlorophylls. PSII binds additional chlorophylls, carotenoids and specific lipids..

Its subcellular location is the plastid. It localises to the chloroplast thylakoid membrane. One of the components of the core complex of photosystem II (PSII). It binds chlorophyll and helps catalyze the primary light-induced photochemical processes of PSII. PSII is a light-driven water:plastoquinone oxidoreductase, using light energy to abstract electrons from H(2)O, generating O(2) and a proton gradient subsequently used for ATP formation. The protein is Photosystem II CP47 reaction center protein of Drimys granadensis.